Consider the following 790-residue polypeptide: Lon protease (790 aa).

In terms of domain architecture, Lon N-terminal spans 23–220 (LPIMPIFHTV…EITLIVNHQL (198 aa)). ATP is bound at residue 372–379 (GPPGTGKT). A Lon proteolytic domain is found at 608 to 789 (ISKPGIAMGL…REVLNIALSR (182 aa)). Catalysis depends on residues Ser-695 and Lys-738.

This sequence belongs to the peptidase S16 family. As to quaternary structure, homohexamer. Organized in a ring with a central cavity.

It is found in the cytoplasm. The enzyme catalyses Hydrolysis of proteins in presence of ATP.. ATP-dependent serine protease that mediates the selective degradation of mutant and abnormal proteins as well as certain short-lived regulatory proteins. Required for cellular homeostasis and for survival from DNA damage and developmental changes induced by stress. Degrades polypeptides processively to yield small peptide fragments that are 5 to 10 amino acids long. Binds to DNA in a double-stranded, site-specific manner. This Syntrophus aciditrophicus (strain SB) protein is Lon protease.